The following is a 541-amino-acid chain: Transmembrane protein 151 homolog (541 aa).

3 helical membrane-spanning segments follow: residues 27 to 47 (GYGK…YATF), 73 to 93 (YNFV…MECW), and 254 to 274 (PWFL…SWPL). Residues 503–541 (ASISHSSSKDLKSLTLKSSSSNNNNNNSNNNNNDDPEHP) form a disordered region. The span at 515 to 535 (SLTLKSSSSNNNNNNSNNNNN) shows a compositional bias: low complexity.

This sequence belongs to the TMEM151 family.

The protein localises to the membrane. The chain is Transmembrane protein 151 homolog from Caenorhabditis elegans.